A 136-amino-acid polypeptide reads, in one-letter code: MAANATSGRPPSIALRQPEATGWRRGIPAKVATKGTQAEREGDVRSGGRARGRCVRLAKRCSPSSLGLRRRRRRTGGRQGDPQIFLGSDFRLLTPANSNPVLENPARTGSRIVIGISRERNLPFCGRSNLPDVSSL.

The tract at residues 1–51 (MAANATSGRPPSIALRQPEATGWRRGIPAKVATKGTQAEREGDVRSGGRAR) is disordered. Positions 37 to 46 (QAEREGDVRS) are enriched in basic and acidic residues.

This is an uncharacterized protein from Homo sapiens (Human).